Here is a 101-residue protein sequence, read N- to C-terminus: Chaperone modulatory protein CbpM (101 aa).

It belongs to the CbpM family.

Its function is as follows. Interacts with CbpA and inhibits both the DnaJ-like co-chaperone activity and the DNA binding activity of CbpA. Together with CbpA, modulates the activity of the DnaK chaperone system. Does not inhibit the co-chaperone activity of DnaJ. The polypeptide is Chaperone modulatory protein CbpM (Salmonella agona (strain SL483)).